A 1128-amino-acid chain; its full sequence is Glutamate receptor-interacting protein 1 (1128 aa).

Ser-43 carries the post-translational modification Phosphoserine. PDZ domains are found at residues 53–136 (VVEL…EYEL), 150–238 (TVEV…EYDV), 252–336 (LVEV…LPHH), 472–561 (EVVL…EFDV), 573–658 (HVKL…RKDE), and 673–755 (TVEL…KKQT). 2 disordered regions span residues 754 to 798 (QTDA…YPST) and 935 to 981 (MSLN…GRKS). Polar residues predominate over residues 944 to 974 (PRSQLGRQASFQERSSSRPHYSQTTRSNTLP). In terms of domain architecture, PDZ 7 spans 1004–1086 (KVTLYKDSDM…KLDLVISRNP (83 aa)). Polar residues predominate over residues 1093 to 1115 (IDQQSLPGDWSEQNSAFFQQPSH). Positions 1093–1128 (IDQQSLPGDWSEQNSAFFQQPSHGGNLETREPTNTL) are disordered.

As to quaternary structure, interacts with EPHA7, EPHB2, KIF5A, KIF5B, KIF5C, GRIA2, GRIA3, GRIPAP1/GRASP1, PPFIA1, PPFIA4, FRAS1, PLCD4, PTPRF and liprins-alpha. Can form homomultimers or heteromultimers with GRIP2. Forms a ternary complex with GRIA2 and CSPG4. Interacts with ATAD1 in an ATP-dependent manner. ATAD1-catalyzed ATP hydrolysis disrupts binding to ATAD1 and to GRIA2 and leads to AMPAR complex disassembly. Interacts with EFNB1, EFNB3 and the C-terminal tail of PRLHR. Interacts with SLC30A9. Interacts with BUD23. Forms a complex with NSG1, GRIA2 and STX12; controls the intracellular fate of AMPAR and the endosomal sorting of the GRIA2 subunit toward recycling and membrane targeting. Interacts with NSG1.

The protein resides in the cytoplasmic vesicle. The protein localises to the perikaryon. It localises to the cell projection. It is found in the dendrite. Its subcellular location is the cytoplasm. The protein resides in the endomembrane system. The protein localises to the postsynaptic cell membrane. It localises to the postsynaptic density. It is found in the endoplasmic reticulum membrane. In terms of biological role, may play a role as a localized scaffold for the assembly of a multiprotein signaling complex and as mediator of the trafficking of its binding partners at specific subcellular location in neurons. Through complex formation with NSG1, GRIA2 and STX12 controls the intracellular fate of AMPAR and the endosomal sorting of the GRIA2 subunit toward recycling and membrane targeting. The polypeptide is Glutamate receptor-interacting protein 1 (GRIP1) (Homo sapiens (Human)).